Consider the following 447-residue polypeptide: uncharacterized protein (447 aa).

The next 12 membrane-spanning stretches (helical) occupy residues 17 to 37 (IMMM…SSSA), 40 to 60 (VAGP…LFIM), 95 to 115 (IYWK…AIFI), 118 to 138 (WLPG…VTIV), 154 to 174 (AMIK…LLFV), 200 to 220 (GLIT…IIGV), 243 to 263 (IVAF…WNQV), 289 to 311 (AVIL…RILY), 333 to 353 (MFAI…SLFA), 361 to 381 (LMGS…FAHL), 393 to 415 (YYVK…ILIG), and 419 to 441 (TTSI…AYLV).

It belongs to the amino acid-polyamine-organocation (APC) superfamily.

Its subcellular location is the cell membrane. Functionally, may participate in leucine metabolism. May transport leucine or a compound related to leucine metabolism. This is an uncharacterized protein from Bacillus subtilis (strain 168).